The chain runs to 66 residues: Beta-toxin Cb3 (66 aa).

In terms of domain architecture, LCN-type CS-alpha/beta spans 1–66 (KEGYIVNYYD…VWPLPNKTCL (66 aa)). Cystine bridges form between C12–C65, C16–C41, C25–C46, and C29–C48.

Belongs to the long (4 C-C) scorpion toxin superfamily. Sodium channel inhibitor family. Beta subfamily. As to expression, expressed by the venom gland.

It localises to the secreted. Beta toxins bind voltage-independently at site-4 of sodium channels (Nav) and reduces peak current and shifts the voltage of activation toward more negative potentials thereby affecting sodium channel activation and promoting spontaneous and repetitive firing. Has an inhibitory effect on voltage-gated sodium channels hNav1.1/SCN1A, hNav1.2/SCN2A, hNav1.4/SCN4A and hNav1.6/SCN8A. Reduces the peak current of hNav1.5/SCN5A but does not shift its voltage of activation. Also affects the inactivation processes of hNav1.1/SCN1A, hNav1.4/SCN4A, hNav1.5/SCN5A and hNav1.6/SCN8A. This toxin is active against mammals and lethal to mice. In Centruroides baergi (Scorpion), this protein is Beta-toxin Cb3.